A 101-amino-acid polypeptide reads, in one-letter code: NADH-quinone oxidoreductase subunit K (101 aa).

The next 3 helical transmembrane spans lie at 4–24 (LAHY…GIFL), 30–50 (IIIL…FVAF), and 61–81 (IFVF…LAIL).

It belongs to the complex I subunit 4L family. NDH-1 is composed of 14 different subunits. Subunits NuoA, H, J, K, L, M, N constitute the membrane sector of the complex.

It is found in the cell inner membrane. It carries out the reaction a quinone + NADH + 5 H(+)(in) = a quinol + NAD(+) + 4 H(+)(out). In terms of biological role, NDH-1 shuttles electrons from NADH, via FMN and iron-sulfur (Fe-S) centers, to quinones in the respiratory chain. The immediate electron acceptor for the enzyme in this species is believed to be ubiquinone. Couples the redox reaction to proton translocation (for every two electrons transferred, four hydrogen ions are translocated across the cytoplasmic membrane), and thus conserves the redox energy in a proton gradient. The polypeptide is NADH-quinone oxidoreductase subunit K (Paraburkholderia xenovorans (strain LB400)).